Consider the following 497-residue polypeptide: Glycerol kinase (497 aa).

T11 is a binding site for ADP. Residues T11, S12, and S13 each contribute to the ATP site. T11 contacts sn-glycerol 3-phosphate. An ADP-binding site is contributed by R15. Sn-glycerol 3-phosphate-binding residues include R81, E82, Y133, and D242. The glycerol site is built by R81, E82, Y133, D242, and Q243. ADP contacts are provided by T264 and G307. 4 residues coordinate ATP: T264, G307, Q311, and G412. The ADP site is built by G412 and N416.

Belongs to the FGGY kinase family.

The catalysed reaction is glycerol + ATP = sn-glycerol 3-phosphate + ADP + H(+). The protein operates within polyol metabolism; glycerol degradation via glycerol kinase pathway; sn-glycerol 3-phosphate from glycerol: step 1/1. Its activity is regulated as follows. Inhibited by fructose 1,6-bisphosphate (FBP). In terms of biological role, key enzyme in the regulation of glycerol uptake and metabolism. Catalyzes the phosphorylation of glycerol to yield sn-glycerol 3-phosphate. The polypeptide is Glycerol kinase (Variovorax paradoxus (strain S110)).